The sequence spans 220 residues: Metalloproteinase inhibitor 2 (220 aa).

The signal sequence occupies residues 1–26 (MGAAARSLRLALGLLLLATLPRPADA). Residue cysteine 27 coordinates Zn(2+). Involved in metalloproteinase-binding regions lie at residues 27 to 30 (CSCS) and 95 to 96 (SA). Disulfide bonds link cysteine 27–cysteine 98, cysteine 29–cysteine 127, cysteine 39–cysteine 152, cysteine 154–cysteine 201, cysteine 159–cysteine 164, and cysteine 172–cysteine 193. One can recognise an NTR domain in the interval 27–152 (CSCSPVHPQQ…SLNHRYQMGC (126 aa)).

The protein belongs to the protease inhibitor I35 (TIMP) family. In terms of assembly, interacts (via the C-terminal) with MMP2 (via the C-terminal PEX domain); the interaction inhibits the MMP2 activity. In terms of processing, the activity of TIMP2 is dependent on the presence of disulfide bonds.

Its subcellular location is the secreted. Functionally, complexes with metalloproteinases (such as collagenases) and irreversibly inactivates them by binding to their catalytic zinc cofactor. This Canis lupus familiaris (Dog) protein is Metalloproteinase inhibitor 2 (TIMP2).